Here is an 822-residue protein sequence, read N- to C-terminus: Sodium/hydrogen exchanger 1 (822 aa).

Over 1-102 (MMLRWSGIWG…FPVLDIDYLH (102 aa)) the chain is Extracellular. The interval 41 to 73 (SPTANTIRGAEPPRERSIGDVTTAPSEPVHHPD) is disordered. The chain crosses the membrane as a helical span at residues 103 to 125 (VRTPFEISLWILLACLMKIGFHV). Topologically, residues 126–134 (IPTISSIVP) are cytoplasmic. The helical transmembrane segment at 135-152 (ESCLLIVVGLLVGGLIKG) threads the bilayer. Residues 153–162 (VGETPPFLQS) are Extracellular-facing. Residues 163–180 (DVFFLFLLPPIILDAGYF) form a helical membrane-spanning segment. At 181–190 (LPLRQFTENL) the chain is on the cytoplasmic side. A helical transmembrane segment spans residues 191–219 (GTILIFAVVGTLWNAFFLGGLLYAVCLVG). The Extracellular segment spans residues 220–226 (GEQINNI). The helical transmembrane segment at 227 to 253 (GLLDTLLFGSIISAVDPVAVVAVFEEI) threads the bilayer. The Cytoplasmic segment spans residues 254-256 (HIN). A helical membrane pass occupies residues 257-287 (ELLHILVFGESLLNDAVTVVLYHLFEEFANY). Over 288–291 (DSIG) the chain is Extracellular. The chain crosses the membrane as a helical span at residues 292 to 326 (ISDIFLGFLSFFVVALGGVFVGVVYGVIAAFTSRF). At 327–332 (TSHIRV) the chain is on the cytoplasmic side. The helical transmembrane segment at 333–345 (IEPLFVFLYSYMA) threads the bilayer. The Extracellular segment spans residues 346 to 354 (YLSAELFHL). A helical membrane pass occupies residues 355-375 (SGIMALIASGVVMRPYVEANI). Residues 376–377 (SH) are Cytoplasmic-facing. A helical transmembrane segment spans residues 378–408 (KSHTTIKYFLKMWSSVSETLIFIFLGVSTVA). Over 409–414 (GSHQWN) the chain is Extracellular. A helical transmembrane segment spans residues 415-442 (WTFVISTLLFCLIARVLGVLVLTWFINK). Topologically, residues 443–448 (FRIVKL) are cytoplasmic. A helical membrane pass occupies residues 449-473 (TPKDQFIIAYGGLRGAIAFSLGYLM). Residues 474–479 (DKKHFP) are Extracellular-facing. Residues 480-509 (MCDLFLTAIITVIFFTVFVQGMTIRPLVDL) form a helical membrane-spanning segment. The segment at 507-549 (VDLLAVKKKQETKRSINEEIHTQFLDHLLTGIEDICGHYGHHH) is interaction with TESC. The Cytoplasmic segment spans residues 510 to 822 (LAVKKKQETK…EGEPFIPKGE (313 aa)). Residues 513 to 520 (KKKQETKR) form a PI(4,5)P2-binding region region. The tract at residues 519–549 (KRSINEEIHTQFLDHLLTGIEDICGHYGHHH) is interaction with CHP2. The interval 544–549 (HYGHHH) is confers pH-dependent PI(4,5)P2 binding. The tract at residues 556–564 (RFNKKYVKK) is PI(4,5)P2-binding region. Residues S603 and S606 each carry the phosphoserine modification. A Phosphothreonine modification is found at T607. Residues S609 and S652 each carry the phosphoserine modification. The segment at 637–822 (KILRSNLQKT…EGEPFIPKGE (186 aa)) is interaction with TESC. Residues 637–822 (KILRSNLQKT…EGEPFIPKGE (186 aa)) are interaction with CALM1. The interaction with PPP3CA stretch occupies residues 688 to 691 (LTVP). A phosphoserine mark is found at S697, S701, and S707. The tract at residues 719–724 (PVITID) is interaction with PPP3CA. 3 positions are modified to phosphoserine: S727, S730, and S733. Residues 752-822 (PTRLTRGEED…EGEPFIPKGE (71 aa)) form a disordered region. The residue at position 756 (T756) is a Phosphothreonine. The segment covering 759–768 (EEDEDEDEDG) has biased composition (acidic residues). T786 is modified (phosphothreonine). Phosphoserine occurs at positions 792, 794, and 803.

Belongs to the monovalent cation:proton antiporter 1 (CPA1) transporter (TC 2.A.36) family. In terms of assembly, homodimer; dimerization is crucial for its function. Oligomer. Interacts with CALM in a calcium-dependent manner. Interacts with TESC. Interacts (via the juxtamembrane region of the cytoplasmic C-terminal domain) with CHP1; the interaction occurs at the plasma membrane in a calcium-dependent manner. Interacts with CHP2; the interaction occurs in a calcium-dependent manner. Interacts with EZR; regulates the cytoskeletal interactions of SLC9A1 and promotes stress fiber formation. Ubiquitinated, leading to its degradation by the proteasome. Ubiquitination is reduced by CHP1. Post-translationally, O-glycosylated. In terms of processing, palmitoylated; may play a major role in SLC9A1 regulation. Phosphorylation at Thr-786 increases SLC9A1 activity. Specifically dephosphorylated at Thr-786 by PPP3CA that negatively regulates SLC9A1 activity. Phosphorylation at Ser-652 by AKT1 reduces SLC9A1 binding to CALM1.

The protein localises to the cell membrane. It localises to the basolateral cell membrane. The enzyme catalyses Na(+)(in) + H(+)(out) = Na(+)(out) + H(+)(in). The catalysed reaction is Li(+)(out) + H(+)(in) = Li(+)(in) + H(+)(out). It carries out the reaction Li(+)(in) + Na(+)(out) = Li(+)(out) + Na(+)(in). With respect to regulation, activated at acidic pHs. Inhibited by amiloride and 5-amino-substituted derivatives. Inhibited by cariporide and eniporide. Phosphatidylinositol 4,5-bisphosphate (PI(4,5)P2) and phosphatidylinositol 3,4,5-trisphosphate (PI(3,4,5)P3) bind and differentially regulate SLC9A1 activity. Its function is as follows. Electroneutral Na(+) /H(+) antiporter that extrudes Na(+) in exchange for external protons driven by the inward sodium ion chemical gradient, protecting cells from acidification that occurs from metabolism. Exchanges intracellular H(+) ions for extracellular Na(+) in 1:1 stoichiometry. Plays a key role in maintening intracellular pH neutral and cell volume, and thus is important for cell growth, proliferation, migration and survival. In addition, can transport lithium Li(+) and also functions as a Na(+)/Li(+) antiporter. SLC9A1 also functions in membrane anchoring and organization of scaffolding complexes that coordinate signaling inputs. The sequence is that of Sodium/hydrogen exchanger 1 (SLC9A1) from Cricetulus griseus (Chinese hamster).